A 215-amino-acid chain; its full sequence is MALVPYTDSGVQSLKRFHDSSASFKFVNHNIEIKQDWKQLGVAAVVWDAALVLCMYLESEGIHLQNSSVIELGAGTGLVGIVAALLGAQVTITDRDLAMEFLRMNVRDNIPKDSLHRVSVRALNWGKSLEEFSTYDFILGADIIYLEETFPDLLQTFLHLSSQQSVILLSSRLRYQRDHDFLEMMKLHFTIADVYYDKNTDVHIFRAQLRQRKEL.

Residues W47, 73-75 (GAG), D94, W125, and A141 each bind S-adenosyl-L-methionine.

Belongs to the methyltransferase superfamily. METTL21 family.

It is found in the cytoplasm. The catalysed reaction is L-lysyl-[protein] + 3 S-adenosyl-L-methionine = N(6),N(6),N(6)-trimethyl-L-lysyl-[protein] + 3 S-adenosyl-L-homocysteine + 3 H(+). Its function is as follows. Protein-lysine methyltransferase that selectively trimethylates residues in heat shock protein 70 (HSP70) family members. The protein is Protein N-lysine methyltransferase METTL21A (mettl21a) of Xenopus tropicalis (Western clawed frog).